Reading from the N-terminus, the 240-residue chain is Ornithine decarboxylase antizyme (240 aa).

Disordered regions lie at residues 18-45 and 69-95; these read RSEP…SSAG and DHDR…SSEF. A compositionally biased stretch (polar residues) spans 21 to 33; the sequence is PISSSNRATKRTI. The span at 34-43 shows a compositional bias: low complexity; the sequence is SSSSSSSSSS. Residues 69 to 84 show a composition bias toward basic and acidic residues; sequence DHDRASPLKEYNRKTS. Polar residues predominate over residues 85-95; sequence IDSTTTASSEF.

Belongs to the ODC antizyme family. Interacts with ODC1 and thereby sterically blocks ODC homodimerization. In terms of tissue distribution, preferentially expressed in adult female midguts.

Functionally, ornithine decarboxylase (ODC) antizyme protein that negatively regulates ODC activity and intracellular polyamine biosynthesis and uptake in response to increased intracellular polyamine levels. Binds to ODC monomers, inhibiting the assembly of the functional ODC homodimer, and targets the monomers for ubiquitin-independent proteolytic destruction by the 26S proteasome. This chain is Ornithine decarboxylase antizyme (Oda), found in Aedes aegypti (Yellowfever mosquito).